Reading from the N-terminus, the 158-residue chain is COP9 signalosome complex subunit 9 (158 aa).

In terms of domain architecture, PCI spans 5-119; that stretch reads LLRNLIEDKT…SVARRATVLE (115 aa).

Component of a COP9 signalosome-like (CSN) complex.

The protein resides in the cytoplasm. Its subcellular location is the nucleus. Functionally, component of the COP9 signalosome (CSN) complex that acts as a regulator of the ubiquitin (Ubl) conjugation pathway by mediating the deneddylation of the cullin subunit of SCF-type E3 ubiquitin-protein ligase complexes. The complex is involved in the regulation of the mating pheromone response. In Kluyveromyces lactis (strain ATCC 8585 / CBS 2359 / DSM 70799 / NBRC 1267 / NRRL Y-1140 / WM37) (Yeast), this protein is COP9 signalosome complex subunit 9 (CSN9).